A 140-amino-acid polypeptide reads, in one-letter code: CBS domain-containing protein YhcV (140 aa).

CBS domains are found at residues M8–G64 and M72–A127.

This chain is CBS domain-containing protein YhcV (yhcV), found in Bacillus subtilis (strain 168).